We begin with the raw amino-acid sequence, 415 residues long: MVIELRDTDIIWRNARLATMDPAVNAAYGLLKEYDLVVRDDKILAILPTAALQTSRCQVIDVQQRLITPGLIDCHTHLVFGGNRAYEWEQRLNGMSYAELSAQGGGINATVSATRASSHEQLERSAQQRLTAFMAEGVTTIEIKSGYGLNLENEEKLLQVVQHLAQHNPIEISPTLLAAHTCPPEYKHNPDAYMDLICEDILPQLWQKGLFEAVDVFCESVGFNLAQTERLFQAAQRWNIPVKGHVEQLSHLGGSELVARYHGLSVDHIEYLDQAGVESLSHSGTVAVLLPGAFYFLQETRCPPIDLLRQFNVPIAVSTDFNPGTSPFASLRMAMNMACVQFGLTPEEVWLGVTRHAARALGREPRHGQLRAGAYADFVVWDAENPVDIFYELGHNPLNTRVFRGVMTHSSIYNR.

2 residues coordinate Fe(3+): His75 and His77. His75 and His77 together coordinate Zn(2+). The 4-imidazolone-5-propanoate site is built by Arg84, Tyr147, and His180. An N-formimidoyl-L-glutamate-binding site is contributed by Tyr147. Fe(3+) is bound at residue His245. His245 provides a ligand contact to Zn(2+). Gln248 lines the 4-imidazolone-5-propanoate pocket. Asp320 provides a ligand contact to Fe(3+). Asp320 provides a ligand contact to Zn(2+). N-formimidoyl-L-glutamate-binding residues include Asn322 and Gly324. Thr325 is a 4-imidazolone-5-propanoate binding site.

The protein belongs to the metallo-dependent hydrolases superfamily. HutI family. It depends on Zn(2+) as a cofactor. Fe(3+) serves as cofactor.

The protein resides in the cytoplasm. The enzyme catalyses 4-imidazolone-5-propanoate + H2O = N-formimidoyl-L-glutamate. The protein operates within amino-acid degradation; L-histidine degradation into L-glutamate; N-formimidoyl-L-glutamate from L-histidine: step 3/3. In terms of biological role, catalyzes the hydrolytic cleavage of the carbon-nitrogen bond in imidazolone-5-propanoate to yield N-formimidoyl-L-glutamate. It is the third step in the universal histidine degradation pathway. This chain is Imidazolonepropionase, found in Photorhabdus laumondii subsp. laumondii (strain DSM 15139 / CIP 105565 / TT01) (Photorhabdus luminescens subsp. laumondii).